Here is a 604-residue protein sequence, read N- to C-terminus: Matrix metalloproteinase-21 (604 aa).

The first 22 residues, 1-22, serve as a signal peptide directing secretion; sequence MPSIKLLVWCCLCVISPRLCHS. A propeptide spanning residues 23–180 is cleaved from the precursor; it reads EKLFHSRDRS…PDPPKIRRKR (158 aa). The tract at residues 132-175 is disordered; it reads KPRCGVPDNQMAKKETEKPTAAQSLENKTKDSENVTQQNPDPPK. Residues 133–140 carry the Cysteine switch motif; it reads PRCGVPDN. A Zn(2+)-binding site is contributed by cysteine 135. 2 N-linked (GlcNAc...) asparagine glycosylation sites follow: asparagine 158 and asparagine 165. Histidine 318 serves as a coordination point for Zn(2+). Residue glutamate 319 is part of the active site. Residues histidine 322 and histidine 328 each coordinate Zn(2+). A disulfide bridge links cysteine 364 with cysteine 595. Hemopexin repeat units follow at residues 365 to 424, 426 to 482, 483 to 531, and 538 to 594; these read EGPF…WHGI, VQNI…FPGI, PSPI…FPAV, and KGNI…WFDI. Asparagine 404 and asparagine 407 each carry an N-linked (GlcNAc...) asparagine glycan.

Belongs to the peptidase M10A family. It depends on Zn(2+) as a cofactor. Ca(2+) serves as cofactor. In terms of processing, the precursor is cleaved by a furin endopeptidase.

It is found in the secreted. Plays a specialized role in the generation of left-right asymmetry during embryogenesis. May act as a negative regulator of the NOTCH-signaling pathway. The polypeptide is Matrix metalloproteinase-21 (mmp21) (Xenopus laevis (African clawed frog)).